A 177-amino-acid polypeptide reads, in one-letter code: Large ribosomal subunit protein uL16m (177 aa).

Belongs to the universal ribosomal protein uL16 family.

Its subcellular location is the mitochondrion. The chain is Large ribosomal subunit protein uL16m (RPL16) from Brassica napus (Rape).